The primary structure comprises 252 residues: 3-dehydroquinate dehydratase (252 aa).

Residues Ser-21, 46–48 (EWR), and Arg-82 contribute to the 3-dehydroquinate site. His-143 functions as the Proton donor/acceptor in the catalytic mechanism. The Schiff-base intermediate with substrate role is filled by Lys-170. 3-dehydroquinate-binding residues include Arg-213, Ser-232, and Gln-236.

This sequence belongs to the type-I 3-dehydroquinase family. In terms of assembly, homodimer.

The enzyme catalyses 3-dehydroquinate = 3-dehydroshikimate + H2O. It participates in metabolic intermediate biosynthesis; chorismate biosynthesis; chorismate from D-erythrose 4-phosphate and phosphoenolpyruvate: step 3/7. Involved in the third step of the chorismate pathway, which leads to the biosynthesis of aromatic amino acids. Catalyzes the cis-dehydration of 3-dehydroquinate (DHQ) and introduces the first double bond of the aromatic ring to yield 3-dehydroshikimate. The chain is 3-dehydroquinate dehydratase from Escherichia coli (strain SE11).